The sequence spans 228 residues: Urease accessory protein UreF (228 aa).

It belongs to the UreF family. In terms of assembly, ureD, UreF and UreG form a complex that acts as a GTP-hydrolysis-dependent molecular chaperone, activating the urease apoprotein by helping to assemble the nickel containing metallocenter of UreC. The UreE protein probably delivers the nickel.

The protein resides in the cytoplasm. In terms of biological role, required for maturation of urease via the functional incorporation of the urease nickel metallocenter. This Blochmanniella pennsylvanica (strain BPEN) protein is Urease accessory protein UreF.